A 512-amino-acid chain; its full sequence is Ascofuranone/ascochlorin biosynthesis clusters transcription regulator (512 aa).

A DNA-binding region (zn(2)-C6 fungal-type) is located at residues C14–C49. Disordered regions lie at residues R54–I87, G118–M148, and G325–I351. Positions K56 to R70 are enriched in basic residues. 2 stretches are compositionally biased toward low complexity: residues G118 to S127 and T327 to M342.

Its subcellular location is the nucleus. In terms of biological role, transcription factor that regulates the expression of the asc-1 and asc-2 gene clusters that mediate the biosynthesis of both ascochlorin and ascofuranone, a strong inhibitor of cyanide-insensitive alternative oxidases and a promising drug candidate against African trypanosomiasis. Binds the 5'-CGGYGNNTTW-3' motif within promoters of the target genes. This is Ascofuranone/ascochlorin biosynthesis clusters transcription regulator from Acremonium egyptiacum (Oospora egyptiaca).